The primary structure comprises 754 residues: Protein NUCLEOLAR FACTOR 1 (754 aa).

Disordered stretches follow at residues 1–56 (MAPN…EAMV), 69–166 (SLGS…ELST), and 390–413 (EDTD…QKSS). The span at 42–52 (SPEESSIEAES) shows a compositional bias: acidic residues. Positions 80-93 (MNKRRQREEEGKSD) are enriched in basic and acidic residues. Acidic residues-rich tracts occupy residues 94 to 110 (TEED…ENSG) and 138 to 161 (DTQE…DEEV). Over residues 402 to 413 (SKNGNSIKQKSS) the composition is skewed to polar residues.

This sequence belongs to the UTP25 family. Component of the ribosomal small subunit (SSU) processome composed of at least 40 protein subunits and snoRNA U3. Interacts with THAL in the nucleus. Preferentially expressed in differentiating cells in young tissues such as floral buds, ovules, embryos, secondary roots, pollen, young seedlings and vascular bundles. Observed ubiquitously.

Its subcellular location is the nucleus. It is found in the nucleolus. In terms of biological role, DEAD-box RNA helicase-like protein required for pre-18S rRNA processing, specifically at sites A0, A1, and A2. Involved in the control of rRNA expression. Required for embryo development and female gametogenesis. The protein is Protein NUCLEOLAR FACTOR 1 of Arabidopsis thaliana (Mouse-ear cress).